The chain runs to 447 residues: Kynureninase (447 aa).

Pyridoxal 5'-phosphate is bound by residues L106, T107, 134-137, D220, H223, and Y245; that span reads FPSD. K246 carries the post-translational modification N6-(pyridoxal phosphate)lysine. Positions 275 and 303 each coordinate pyridoxal 5'-phosphate.

Belongs to the kynureninase family. As to quaternary structure, homodimer. The cofactor is pyridoxal 5'-phosphate.

Its subcellular location is the cytoplasm. The enzyme catalyses L-kynurenine + H2O = anthranilate + L-alanine + H(+). It catalyses the reaction 3-hydroxy-L-kynurenine + H2O = 3-hydroxyanthranilate + L-alanine + H(+). It participates in amino-acid degradation; L-kynurenine degradation; L-alanine and anthranilate from L-kynurenine: step 1/1. It functions in the pathway cofactor biosynthesis; NAD(+) biosynthesis; quinolinate from L-kynurenine: step 2/3. Catalyzes the cleavage of L-kynurenine (L-Kyn) and L-3-hydroxykynurenine (L-3OHKyn) into anthranilic acid (AA) and 3-hydroxyanthranilic acid (3-OHAA), respectively. The polypeptide is Kynureninase (Eremothecium gossypii (strain ATCC 10895 / CBS 109.51 / FGSC 9923 / NRRL Y-1056) (Yeast)).